The following is a 256-amino-acid chain: MPITANTLYRDSFNFFKNQLLSTLTLAVLAALVTTLLGHLFIPDSEQMKLLTEAEFTFATSGKAGIQELVSQMTPEQQSMIMRAGIGTIFSSMIGSVLLVGGVLTLVAAVSAGNRISSLQAIGLSASQLPKLFLLLLICTLLIQFGLMLMLVPGIILSIALALSPVIMTAERRGVFASMKISWKLAFANIRLLVPAILLWLTARLLLVFIIDRLTFIHSEMAGIILGVFNNLISAILLIYLYRLYMLIASPQQKSI.

5 helical membrane-spanning segments follow: residues 23-43 (TLTLAVLAALVTTLLGHLFIP), 89-109 (IFSSMIGSVLLVGGVLTLVAA), 132-152 (LFLLLLICTLLIQFGLMLMLV), 192-212 (LLVPAILLWLTARLLLVFIID), and 221-241 (MAGIILGVFNNLISAILLIYL).

This sequence belongs to the UPF0259 family.

Its subcellular location is the cell inner membrane. The protein is UPF0259 membrane protein plu2479 of Photorhabdus laumondii subsp. laumondii (strain DSM 15139 / CIP 105565 / TT01) (Photorhabdus luminescens subsp. laumondii).